The sequence spans 514 residues: MTLIWRHLLRPLCLVTPAPRILEMRPFLNLGASWTSVTKLSLHTKPRMPPCDFMPERYQSLGYNRVLEIHKEHLSPVVTAYFQKPLLLHQGHMEWLFDAEGNRYLDFFSGIVTVSVGHCHPKVNAVAQKQLGRLWHTSTVFFHPPMHEYAEKLAALLPEPLKVIFLVNSGSEANELAMLMARAHSNNIDIISFRGAYHGCSPYTLGLTNIGTYKMELPGGTGCQPTMCPDVFRGPWGGSHCRDSPVQTIRKCSCAPDCCQAKDQYIEQFKDTLSTSVAKSIAGFFAEPIQGVNGVVQYPKGFLKEAFELVRARGGVCIADEVQTGFGRLGSHFRGFQTHDVLPDIVTMAKGIGNGFPMAAVVTTPEIAKSLVKRLQHFNTFGGNPMACAIGSAVLEVIKEENLQENSQEVGTYMLLQFAKLRDEFEIVGDVRGKGLMIGIEMVQDKISRRPLPREEVNQIHEDCKHMGLLVGRGSIFSQTFRIAPSMCITKPEVDFAVEVFRSALTQHMERRAK.

The N-terminal 41 residues, 1–41, are a transit peptide targeting the mitochondrion; that stretch reads MTLIWRHLLRPLCLVTPAPRILEMRPFLNLGASWTSVTKLS. The residue at position 71 (Lys71) is an N6-acetyllysine; alternate. Lys71 is modified (N6-succinyllysine; alternate). Lys84 is modified (N6-acetyllysine). Position 262 is an N6-acetyllysine; alternate (Lys262). Lys262 carries the N6-succinyllysine; alternate modification. At Lys304 the chain carries N6-succinyllysine. Lys350 is subject to N6-(pyridoxal phosphate)lysine. Lys420 carries the post-translational modification N6-acetyllysine; alternate. An N6-succinyllysine; alternate modification is found at Lys420.

Belongs to the class-III pyridoxal-phosphate-dependent aminotransferase family. As to quaternary structure, homotetramer. Pyridoxal 5'-phosphate is required as a cofactor.

It localises to the mitochondrion. The enzyme catalyses glyoxylate + L-alanine = glycine + pyruvate. It catalyses the reaction (R)-3-amino-2-methylpropanoate + pyruvate = 2-methyl-3-oxopropanoate + L-alanine. The catalysed reaction is 3-oxopropanoate + L-alanine = beta-alanine + pyruvate. It carries out the reaction 2-oxobutanoate + L-alanine = (2S)-2-aminobutanoate + pyruvate. The enzyme catalyses N(omega),N(omega)-dimethyl-L-arginine + pyruvate = 5-(3,3-dimethylguanidino)-2-oxopentanoate + L-alanine. It catalyses the reaction N(omega),N('omega)-dimethyl-L-arginine + pyruvate = 5-(3,3'-dimethylguanidino)-2-oxopentanoate + L-alanine. The catalysed reaction is N(omega),N(omega)-dimethyl-L-arginine + glyoxylate = 5-(3,3-dimethylguanidino)-2-oxopentanoate + glycine. It carries out the reaction N(omega),N('omega)-dimethyl-L-arginine + glyoxylate = 5-(3,3'-dimethylguanidino)-2-oxopentanoate + glycine. The enzyme catalyses N(omega)-methyl-L-arginine + pyruvate = 5-(3-methylguanidino)-2-oxopentanoate + L-alanine. It catalyses the reaction N(omega)-methyl-L-arginine + glyoxylate = 5-(3-methylguanidino)-2-oxopentanoate + glycine. The catalysed reaction is L-ornithine + pyruvate = 5-amino-2-oxopentanoate + L-alanine. It carries out the reaction L-ornithine + glyoxylate = 5-amino-2-oxopentanoate + glycine. The enzyme catalyses (2S)-2-aminobutanoate + glyoxylate = 2-oxobutanoate + glycine. It catalyses the reaction N(omega),N(omega)-dimethyl-L-arginine + oxaloacetate = 5-(3,3-dimethylguanidino)-2-oxopentanoate + L-aspartate. The catalysed reaction is oxaloacetate + L-alanine = L-aspartate + pyruvate. It carries out the reaction N(omega),N(omega)-dimethyl-L-arginine + 2-oxobutanoate = 5-(3,3-dimethylguanidino)-2-oxopentanoate + (2S)-2-aminobutanoate. The enzyme catalyses 2-oxopentanoate + N(omega),N(omega)-dimethyl-L-arginine = 5-(3,3-dimethylguanidino)-2-oxopentanoate + L-2-aminopentanoate. It catalyses the reaction 2-oxohexanoate + N(omega),N(omega)-dimethyl-L-arginine = L-2-aminohexanoate + 5-(3,3-dimethylguanidino)-2-oxopentanoate. Its function is as follows. Multifunctional aminotransferase with a broad substrate specificity. Catalyzes the conversion of glyoxylate to glycine using alanine as the amino donor. Catalyzes metabolism of not L- but the D-isomer of D-beta-aminoisobutyric acid to generate 2-methyl-3-oxopropanoate and alanine. Catalyzes the transfer of the amino group from beta-alanine to pyruvate to yield L-alanine and 3-oxopropanoate. Can metabolize NG-monomethyl-L-arginine (NMMA), asymmetric NG,NG-dimethyl-L-arginine (ADMA) and symmetric NG,N'G-dimethyl-L-arginine (SDMA). ADMA is a potent inhibitor of nitric-oxide (NO) synthase, and this activity provides mechanism through which the kidney regulates blood pressure. The chain is Alanine--glyoxylate aminotransferase 2, mitochondrial (AGXT2) from Pongo abelii (Sumatran orangutan).